Here is a 213-residue protein sequence, read N- to C-terminus: Na(+)-translocating NADH-quinone reductase subunit D (213 aa).

The next 6 membrane-spanning stretches (helical) occupy residues 22–42 (LIAI…TTAL), 43–63 (TMGF…SLLR), 77–97 (IIIS…FFTI), 101–121 (LSVF…AESM), 131–151 (FLDG…ISII), and 183–203 (LGLM…IWIV).

Belongs to the NqrDE/RnfAE family. As to quaternary structure, composed of six subunits; NqrA, NqrB, NqrC, NqrD, NqrE and NqrF.

It is found in the cell inner membrane. The catalysed reaction is a ubiquinone + n Na(+)(in) + NADH + H(+) = a ubiquinol + n Na(+)(out) + NAD(+). NQR complex catalyzes the reduction of ubiquinone-1 to ubiquinol by two successive reactions, coupled with the transport of Na(+) ions from the cytoplasm to the periplasm. NqrA to NqrE are probably involved in the second step, the conversion of ubisemiquinone to ubiquinol. The protein is Na(+)-translocating NADH-quinone reductase subunit D of Chlamydia trachomatis serovar A (strain ATCC VR-571B / DSM 19440 / HAR-13).